A 267-amino-acid chain; its full sequence is Putative F-box protein At1g61060 (267 aa).

Positions 15-63 (DYFDAIHVDLFTAKILSKLPVKSIAQCRCVSKLWSSQIRRPYYNMLFPI) constitute an F-box domain.

This chain is Putative F-box protein At1g61060, found in Arabidopsis thaliana (Mouse-ear cress).